Here is an 84-residue protein sequence, read N- to C-terminus: RNA-binding protein Hfq (84 aa).

One can recognise a Sm domain in the interval 11–71; sequence DVFLNFIRKN…ISTVMPSTPI (61 aa).

It belongs to the Hfq family. As to quaternary structure, homohexamer.

Its function is as follows. RNA chaperone that binds small regulatory RNA (sRNAs) and mRNAs to facilitate mRNA translational regulation in response to envelope stress, environmental stress and changes in metabolite concentrations. Also binds with high specificity to tRNAs. This Paramagnetospirillum magneticum (strain ATCC 700264 / AMB-1) (Magnetospirillum magneticum) protein is RNA-binding protein Hfq.